The primary structure comprises 469 residues: MYHIDFTKPIHVHFIGIGGISMSGLAELLHTKGFTVSGSDAKDSKIVDRLRHLGITIFIGQKAENITEDIDLVVYTAAVKSDNVEYQAVQKHNIPMLDRADFLGQVMLQYKNAIGVSGTHGKTTTTSMVSLMMLEGNFDPTISVGGILDNIEGNIRIGHSENFIVESCEYKNSFLSFNPAHAIILNIEAEHLDFFKDIEDIRTSFHTFAKKLPDYGNLVVWGGIDRYEELIEDLSCNVITYGMFSSEEEREQNKDRYDYAACNVTSDDFGLRSYDLYKHGKFVDRINLAVIGDHNVLNSLAAISLVDTLGGTMSAIKKALLAYKGTERRFERKGVLNGITIVDDYAHHPSEIKATLIAAASYPHKDIWCVFQPHTYTRTKSFFHDFTTALALADKIVLADIYAAREENPGDISSKDIQNELLKIGKEAYYISDFAEIEKFLLEHCTNGDLLITMGAGDVVSIGESLLQK.

Residue G118–T124 coordinates ATP.

It belongs to the MurCDEF family.

The protein resides in the cytoplasm. It carries out the reaction UDP-N-acetyl-alpha-D-muramate + L-alanine + ATP = UDP-N-acetyl-alpha-D-muramoyl-L-alanine + ADP + phosphate + H(+). The protein operates within cell wall biogenesis; peptidoglycan biosynthesis. Cell wall formation. This is UDP-N-acetylmuramate--L-alanine ligase from Lachnoclostridium phytofermentans (strain ATCC 700394 / DSM 18823 / ISDg) (Clostridium phytofermentans).